A 149-amino-acid polypeptide reads, in one-letter code: D-aminoacyl-tRNA deacylase (149 aa).

The Gly-cisPro motif, important for rejection of L-amino acids motif lies at glycine 137–proline 138.

Belongs to the DTD family. In terms of assembly, homodimer.

Its subcellular location is the cytoplasm. It carries out the reaction glycyl-tRNA(Ala) + H2O = tRNA(Ala) + glycine + H(+). The catalysed reaction is a D-aminoacyl-tRNA + H2O = a tRNA + a D-alpha-amino acid + H(+). Functionally, an aminoacyl-tRNA editing enzyme that deacylates mischarged D-aminoacyl-tRNAs. Also deacylates mischarged glycyl-tRNA(Ala), protecting cells against glycine mischarging by AlaRS. Acts via tRNA-based rather than protein-based catalysis; rejects L-amino acids rather than detecting D-amino acids in the active site. By recycling D-aminoacyl-tRNA to D-amino acids and free tRNA molecules, this enzyme counteracts the toxicity associated with the formation of D-aminoacyl-tRNA entities in vivo and helps enforce protein L-homochirality. This is D-aminoacyl-tRNA deacylase from Syntrophomonas wolfei subsp. wolfei (strain DSM 2245B / Goettingen).